Consider the following 155-residue polypeptide: FAD synthase (155 aa).

ATP is bound by residues 9–10 (TF), 14–17 (HPGH), and aspartate 92.

This sequence belongs to the archaeal FAD synthase family. As to quaternary structure, homodimer. A divalent metal cation is required as a cofactor.

It catalyses the reaction FMN + ATP + H(+) = FAD + diphosphate. It participates in cofactor biosynthesis; FAD biosynthesis; FAD from FMN: step 1/1. Catalyzes the transfer of the AMP portion of ATP to flavin mononucleotide (FMN) to produce flavin adenine dinucleotide (FAD) coenzyme. The polypeptide is FAD synthase (Archaeoglobus profundus (strain DSM 5631 / JCM 9629 / NBRC 100127 / Av18)).